Consider the following 239-residue polypeptide: Fatty acid metabolism regulator protein (239 aa).

The HTH gntR-type domain maps to 6 to 74; sequence QSPAGFAEEY…HGKPTKVNNF (69 aa). The H-T-H motif DNA-binding region spans 34–53; it reads ERELSELIGVTRTTLREVLQ.

Homodimer.

Its subcellular location is the cytoplasm. Multifunctional regulator of fatty acid metabolism. This is Fatty acid metabolism regulator protein from Klebsiella pneumoniae subsp. pneumoniae (strain ATCC 700721 / MGH 78578).